Consider the following 253-residue polypeptide: Aspartate/glutamate leucyltransferase (253 aa).

Belongs to the R-transferase family. Bpt subfamily.

The protein localises to the cytoplasm. It carries out the reaction N-terminal L-glutamyl-[protein] + L-leucyl-tRNA(Leu) = N-terminal L-leucyl-L-glutamyl-[protein] + tRNA(Leu) + H(+). The catalysed reaction is N-terminal L-aspartyl-[protein] + L-leucyl-tRNA(Leu) = N-terminal L-leucyl-L-aspartyl-[protein] + tRNA(Leu) + H(+). Functions in the N-end rule pathway of protein degradation where it conjugates Leu from its aminoacyl-tRNA to the N-termini of proteins containing an N-terminal aspartate or glutamate. This chain is Aspartate/glutamate leucyltransferase, found in Allorhizobium ampelinum (strain ATCC BAA-846 / DSM 112012 / S4) (Agrobacterium vitis (strain S4)).